We begin with the raw amino-acid sequence, 149 residues long: Sex-regulated protein janus-A (149 aa).

Lys-46 contributes to the substrate binding site. His-77 serves as the catalytic Proton acceptor. 118–120 lines the substrate pocket; the sequence is STG.

This sequence belongs to the janus family.

In terms of biological role, janA and janB regulate somatic sex differentiation. This Drosophila pseudoobscura pseudoobscura (Fruit fly) protein is Sex-regulated protein janus-A (janA).